The following is a 68-amino-acid chain: Large ribosomal subunit protein uL29 (68 aa).

This sequence belongs to the universal ribosomal protein uL29 family.

The chain is Large ribosomal subunit protein uL29 from Acidiphilium cryptum (strain JF-5).